A 356-amino-acid polypeptide reads, in one-letter code: MSTVTITDLARENVRNLTPYQSARRLGGNGDVWLNANEYPTAVEFQLTQQTLNRYPECQPKAVIENYAQYAGVKPEQVLVSRGADEGIELLIRAFCEPGKDAILYYPPTYGMYSVSAETIGVECRTVPTLDNWQLDLQGISDKLDGVKVVYVCSPNNPTGQLINPQDFRILLELTRGKAIVVADEAYIEFCPQASLAGWLTEYPHLAILRTLSKAFALAGLRCGFTLANEEVINLLMKVIAPYPLSTPVADIAAQALSPQGIVAMRERVAQIIAEREYLIAALKEISCVEQVFDSETNYILARFKASSAVFKSLWDQGIILRDQNKQPSLSGCLRITVGTREESQRVIDALRAEQV.

Lys-214 is subject to N6-(pyridoxal phosphate)lysine.

Belongs to the class-II pyridoxal-phosphate-dependent aminotransferase family. Histidinol-phosphate aminotransferase subfamily. In terms of assembly, homodimer. Pyridoxal 5'-phosphate is required as a cofactor.

The enzyme catalyses L-histidinol phosphate + 2-oxoglutarate = 3-(imidazol-4-yl)-2-oxopropyl phosphate + L-glutamate. Its pathway is amino-acid biosynthesis; L-histidine biosynthesis; L-histidine from 5-phospho-alpha-D-ribose 1-diphosphate: step 7/9. This chain is Histidinol-phosphate aminotransferase, found in Escherichia coli O17:K52:H18 (strain UMN026 / ExPEC).